The chain runs to 181 residues: UPF0302 protein LMHCC_0635 (181 aa).

This sequence belongs to the UPF0302 family.

This is UPF0302 protein LMHCC_0635 from Listeria monocytogenes serotype 4a (strain HCC23).